Here is a 332-residue protein sequence, read N- to C-terminus: Abscisic acid-inducible protein kinase (332 aa).

ATP-binding positions include 1–8 (GSGNFGVA) and K23. One can recognise a Protein kinase domain in the interval 1-250 (GSGNFGVAKL…IPEIKNHPWF (250 aa)). D113 functions as the Proton acceptor in the catalytic mechanism.

It belongs to the protein kinase superfamily. Ser/Thr protein kinase family. In terms of processing, autophosphorylated.

The catalysed reaction is L-seryl-[protein] + ATP = O-phospho-L-seryl-[protein] + ADP + H(+). It carries out the reaction L-threonyl-[protein] + ATP = O-phospho-L-threonyl-[protein] + ADP + H(+). In terms of biological role, involved in water-stress responses. The chain is Abscisic acid-inducible protein kinase from Triticum aestivum (Wheat).